A 212-amino-acid chain; its full sequence is Ribosomal RNA small subunit methyltransferase G (212 aa).

S-adenosyl-L-methionine contacts are provided by residues G76, M81, 127 to 128 (VE), and R145.

It belongs to the methyltransferase superfamily. RNA methyltransferase RsmG family.

It is found in the cytoplasm. It carries out the reaction guanosine(527) in 16S rRNA + S-adenosyl-L-methionine = N(7)-methylguanosine(527) in 16S rRNA + S-adenosyl-L-homocysteine. Specifically methylates the N7 position of guanine in position 527 of 16S rRNA. This chain is Ribosomal RNA small subunit methyltransferase G, found in Acinetobacter baylyi (strain ATCC 33305 / BD413 / ADP1).